Reading from the N-terminus, the 84-residue chain is Cell division topological specificity factor (84 aa).

It belongs to the MinE family.

Prevents the cell division inhibition by proteins MinC and MinD at internal division sites while permitting inhibition at polar sites. This ensures cell division at the proper site by restricting the formation of a division septum at the midpoint of the long axis of the cell. This is Cell division topological specificity factor from Pseudomonas syringae pv. tomato (strain ATCC BAA-871 / DC3000).